We begin with the raw amino-acid sequence, 177 residues long: ATP synthase subunit delta (177 aa).

Belongs to the ATPase delta chain family. In terms of assembly, F-type ATPases have 2 components, F(1) - the catalytic core - and F(0) - the membrane proton channel. F(1) has five subunits: alpha(3), beta(3), gamma(1), delta(1), epsilon(1). F(0) has three main subunits: a(1), b(2) and c(10-14). The alpha and beta chains form an alternating ring which encloses part of the gamma chain. F(1) is attached to F(0) by a central stalk formed by the gamma and epsilon chains, while a peripheral stalk is formed by the delta and b chains.

The protein localises to the cell inner membrane. Functionally, f(1)F(0) ATP synthase produces ATP from ADP in the presence of a proton or sodium gradient. F-type ATPases consist of two structural domains, F(1) containing the extramembraneous catalytic core and F(0) containing the membrane proton channel, linked together by a central stalk and a peripheral stalk. During catalysis, ATP synthesis in the catalytic domain of F(1) is coupled via a rotary mechanism of the central stalk subunits to proton translocation. In terms of biological role, this protein is part of the stalk that links CF(0) to CF(1). It either transmits conformational changes from CF(0) to CF(1) or is implicated in proton conduction. The chain is ATP synthase subunit delta from Shewanella piezotolerans (strain WP3 / JCM 13877).